A 270-amino-acid polypeptide reads, in one-letter code: Tryptophan synthase alpha chain (270 aa).

Catalysis depends on proton acceptor residues Glu-50 and Asp-61.

It belongs to the TrpA family. As to quaternary structure, tetramer of two alpha and two beta chains.

It carries out the reaction (1S,2R)-1-C-(indol-3-yl)glycerol 3-phosphate + L-serine = D-glyceraldehyde 3-phosphate + L-tryptophan + H2O. It participates in amino-acid biosynthesis; L-tryptophan biosynthesis; L-tryptophan from chorismate: step 5/5. Its function is as follows. The alpha subunit is responsible for the aldol cleavage of indoleglycerol phosphate to indole and glyceraldehyde 3-phosphate. The polypeptide is Tryptophan synthase alpha chain (Chlorobium luteolum (strain DSM 273 / BCRC 81028 / 2530) (Pelodictyon luteolum)).